We begin with the raw amino-acid sequence, 119 residues long: Large ribosomal subunit protein bL20 (119 aa).

The protein belongs to the bacterial ribosomal protein bL20 family.

Its function is as follows. Binds directly to 23S ribosomal RNA and is necessary for the in vitro assembly process of the 50S ribosomal subunit. It is not involved in the protein synthesizing functions of that subunit. The polypeptide is Large ribosomal subunit protein bL20 (Lactococcus lactis subsp. cremoris (strain MG1363)).